Reading from the N-terminus, the 506-residue chain is RNA-splicing ligase RtcB homolog (506 aa).

Residues Asp-120, Cys-123, His-228, His-260, and His-354 each contribute to the Mn(2+) site. 227 to 231 serves as a coordination point for GMP; it reads NHYAE. GMP contacts are provided by residues 354–355, 403–406, Ser-410, 429–432, and Lys-505; these read HN, GGSM, and HGAG. The active-site GMP-histidine intermediate is the His-429.

Belongs to the RtcB family. As to quaternary structure, catalytic component of the tRNA-splicing ligase complex. Requires Mn(2+) as cofactor.

The catalysed reaction is a 3'-end 3'-phospho-ribonucleotide-RNA + a 5'-end dephospho-ribonucleoside-RNA + GTP = a ribonucleotidyl-ribonucleotide-RNA + GMP + diphosphate. It carries out the reaction a 3'-end 2',3'-cyclophospho-ribonucleotide-RNA + a 5'-end dephospho-ribonucleoside-RNA + GTP + H2O = a ribonucleotidyl-ribonucleotide-RNA + GMP + diphosphate + H(+). Functionally, catalytic subunit of the tRNA-splicing ligase complex that acts by directly joining spliced tRNA halves to mature-sized tRNAs by incorporating the precursor-derived splice junction phosphate into the mature tRNA as a canonical 3',5'-phosphodiester. May act as an RNA ligase with broad substrate specificity, and may function toward other RNAs. The sequence is that of RNA-splicing ligase RtcB homolog from Anopheles gambiae (African malaria mosquito).